The primary structure comprises 205 residues: Lymphotoxin-alpha (205 aa).

Positions 1 to 34 (MTPPERLFLSRVRGTPLHLLLLGLLLVLLPGAQG) are cleaved as a signal peptide. An O-linked (GalNAc...) threonine glycan is attached at T41. In terms of domain architecture, THD spans 63 to 205 (PAAHLIGDPS…STVFFGAFAL (143 aa)). N96 carries an N-linked (GlcNAc...) asparagine glycan.

Belongs to the tumor necrosis factor family. In terms of assembly, homotrimer, and heterotrimer of either two LTB and one LTA subunits or (less prevalent) two LTA and one LTB subunits. Interacts with TNFRSF14.

The protein resides in the secreted. The protein localises to the membrane. Its function is as follows. Cytokine that in its homotrimeric form binds to TNFRSF1A/TNFR1, TNFRSF1B/TNFBR and TNFRSF14/HVEM. In its heterotrimeric form with LTB binds to TNFRSF3/LTBR. Lymphotoxin is produced by lymphocytes and is cytotoxic for a wide range of tumor cells in vitro and in vivo. The protein is Lymphotoxin-alpha (LTA) of Macaca mulatta (Rhesus macaque).